We begin with the raw amino-acid sequence, 196 residues long: Holliday junction branch migration complex subunit RuvA (196 aa).

Positions 1–65 (MIGYLRGKII…EDALQLFGFH (65 aa)) are domain I. Positions 66–140 (DKEEKNLFLS…GKLVSIEEGG (75 aa)) are domain II. A flexible linker region spans residues 140–144 (GVVAK). The segment at 145 to 196 (AKSVAHTQITSALLNLGYKSQLVDQFVSSLPADIAVEDGIRKGFQTLSGGLS) is domain III.

Belongs to the RuvA family. In terms of assembly, homotetramer. Forms an RuvA(8)-RuvB(12)-Holliday junction (HJ) complex. HJ DNA is sandwiched between 2 RuvA tetramers; dsDNA enters through RuvA and exits via RuvB. An RuvB hexamer assembles on each DNA strand where it exits the tetramer. Each RuvB hexamer is contacted by two RuvA subunits (via domain III) on 2 adjacent RuvB subunits; this complex drives branch migration. In the full resolvosome a probable DNA-RuvA(4)-RuvB(12)-RuvC(2) complex forms which resolves the HJ.

Its subcellular location is the cytoplasm. Functionally, the RuvA-RuvB-RuvC complex processes Holliday junction (HJ) DNA during genetic recombination and DNA repair, while the RuvA-RuvB complex plays an important role in the rescue of blocked DNA replication forks via replication fork reversal (RFR). RuvA specifically binds to HJ cruciform DNA, conferring on it an open structure. The RuvB hexamer acts as an ATP-dependent pump, pulling dsDNA into and through the RuvAB complex. HJ branch migration allows RuvC to scan DNA until it finds its consensus sequence, where it cleaves and resolves the cruciform DNA. In Bdellovibrio bacteriovorus (strain ATCC 15356 / DSM 50701 / NCIMB 9529 / HD100), this protein is Holliday junction branch migration complex subunit RuvA.